A 319-amino-acid polypeptide reads, in one-letter code: Phosphate acyltransferase (319 aa).

It belongs to the PlsX family. As to quaternary structure, homodimer. Probably interacts with PlsY.

The protein localises to the cytoplasm. It carries out the reaction a fatty acyl-[ACP] + phosphate = an acyl phosphate + holo-[ACP]. Its pathway is lipid metabolism; phospholipid metabolism. Its function is as follows. Catalyzes the reversible formation of acyl-phosphate (acyl-PO(4)) from acyl-[acyl-carrier-protein] (acyl-ACP). This enzyme utilizes acyl-ACP as fatty acyl donor, but not acyl-CoA. The sequence is that of Phosphate acyltransferase from Chlamydia muridarum (strain MoPn / Nigg).